We begin with the raw amino-acid sequence, 201 residues long: Large ribosomal subunit protein uL4 (201 aa).

Positions 45–71 (AQKTRAEVTGSGKKPWRQKGTGRARAG) are disordered.

The protein belongs to the universal ribosomal protein uL4 family. As to quaternary structure, part of the 50S ribosomal subunit.

Its function is as follows. One of the primary rRNA binding proteins, this protein initially binds near the 5'-end of the 23S rRNA. It is important during the early stages of 50S assembly. It makes multiple contacts with different domains of the 23S rRNA in the assembled 50S subunit and ribosome. Functionally, forms part of the polypeptide exit tunnel. The polypeptide is Large ribosomal subunit protein uL4 (Shewanella loihica (strain ATCC BAA-1088 / PV-4)).